The chain runs to 157 residues: Endoribonuclease YbeY (157 aa).

Residues His121, His125, and His131 each coordinate Zn(2+).

Belongs to the endoribonuclease YbeY family. It depends on Zn(2+) as a cofactor.

Its subcellular location is the cytoplasm. Functionally, single strand-specific metallo-endoribonuclease involved in late-stage 70S ribosome quality control and in maturation of the 3' terminus of the 16S rRNA. The protein is Endoribonuclease YbeY of Salinispora tropica (strain ATCC BAA-916 / DSM 44818 / JCM 13857 / NBRC 105044 / CNB-440).